A 253-amino-acid polypeptide reads, in one-letter code: Histone-arginine methyltransferase METTL23 (253 aa).

Residues 1–23 form a disordered region; the sequence is MDSVRPRAPWAPPPDPASLDSPT.

The protein belongs to the methyltransferase superfamily. METTL23 family. As to quaternary structure, interacts with HSPA5, HSP90B1, TUBULIN, UGGT1 and UGGT2. Interacts with TET3. Interacts with STPG4. As to expression, ubiquitously expressed.

It is found in the nucleus. The protein resides in the cytoplasm. The enzyme catalyses L-arginyl-[protein] + 2 S-adenosyl-L-methionine = N(omega),N(omega)-dimethyl-L-arginyl-[protein] + 2 S-adenosyl-L-homocysteine + 2 H(+). In terms of biological role, histone methyltransferase that dimethylates histone H3 at 'Arg-17', forming asymmetric dimethylarginine (H3R17me2a), leading to activate transcription via chromatin remodeling. Maternal factor involved in epigenetic chromatin reprogramming of the paternal genome in the zygote: mediates H3R17me2a, promoting histone H3.3 incorporation in the male pronucleus, leading to TET3 recruitment and subsequent DNA demethylation. The protein is Histone-arginine methyltransferase METTL23 of Mus musculus (Mouse).